Here is a 64-residue protein sequence, read N- to C-terminus: Alpha-conotoxin CnIA (64 aa).

The first 21 residues, 1–21 (MGMRMMFTVFLLVVLTTTVVS), serve as a signal peptide directing secretion. The propeptide occupies 22–47 (FPSDSASDGRDDEAKDERSDIYESKR). 2 disulfides stabilise this stretch: Cys51/Cys56 and Cys52/Cys62. Position 54 is a 4-hydroxyproline; in CnIK; partial (Pro54). Cysteine amide is present on Cys62.

This sequence belongs to the conotoxin A superfamily. In terms of tissue distribution, expressed by the venom duct.

The protein localises to the secreted. Its function is as follows. Alpha-conotoxins act on postsynaptic membranes, they bind to the nicotinic acetylcholine receptors (nAChR) and thus inhibit them. CnIA and CnIB block muscular nAChR alpha-1/gamma and alpha-1/delta subunits. The sequence is that of Alpha-conotoxin CnIA from Conus consors (Singed cone).